The sequence spans 417 residues: Hydroxysteroid dehydrogenase-like protein 2 (417 aa).

NADP(+) is bound by residues 17–23, K42, and D74; that span reads GASRGIG. The active-site Proton acceptor is Y168. K172 contributes to the NADP(+) binding site. The 109-residue stretch at 306 to 414 folds into the SCP2 domain; sequence ASPLQETFKA…KLEKILGQMN (109 aa).

It belongs to the short-chain dehydrogenases/reductases (SDR) family.

Its subcellular location is the peroxisome. It localises to the mitochondrion. Has apparently no steroid dehydrogenase activity. Might act as a metabolic regulator that affects systemic adaptation to nutritional cues. The chain is Hydroxysteroid dehydrogenase-like protein 2 (hsdl2) from Xenopus laevis (African clawed frog).